The following is a 165-amino-acid chain: Lipoprotein signal peptidase (165 aa).

Transmembrane regions (helical) follow at residues 64–84 (LGRW…GAWM) and 88–108 (GSRL…GNAV). Active-site residues include Asp118 and Asp136. Residues 128 to 148 (SWYVFNVADAGIVAGVAGLLV) traverse the membrane as a helical segment.

This sequence belongs to the peptidase A8 family.

The protein resides in the cell inner membrane. It carries out the reaction Release of signal peptides from bacterial membrane prolipoproteins. Hydrolyzes -Xaa-Yaa-Zaa-|-(S,diacylglyceryl)Cys-, in which Xaa is hydrophobic (preferably Leu), and Yaa (Ala or Ser) and Zaa (Gly or Ala) have small, neutral side chains.. Its pathway is protein modification; lipoprotein biosynthesis (signal peptide cleavage). This protein specifically catalyzes the removal of signal peptides from prolipoproteins. In Methylobacterium sp. (strain 4-46), this protein is Lipoprotein signal peptidase.